The sequence spans 189 residues: MGMMLLLLSMLAGLVAEAEGQAFHFGKCPNPPVQENFDLNKYLGRWYEIEKIPVSFEKGNCIQANYSLKENGRVKVLNQELRPDGTVNQIEGEATHSNITEPAKLGVKFFQLMPSAPYWVLATDYDNYALVYSCTNIIWLFHVDHIWILGRNRYLPQETVTYLKDILTSNNIDIEKMTLTDQANCPDFL.

A signal peptide spans 1–20 (MGMMLLLLSMLAGLVAEAEG). The residue at position 21 (Gln21) is a Pyrrolidone carboxylic acid. Cystine bridges form between Cys28/Cys134 and Cys61/Cys185. 2 N-linked (GlcNAc...) asparagine glycosylation sites follow: Asn65 and Asn98.

It belongs to the calycin superfamily. Lipocalin family. In terms of assembly, homodimer.

It localises to the secreted. APOD occurs in the macromolecular complex with lecithin-transport and binding of bilin. Appears to be able to transport a variety of ligands in a number of different contexts. The sequence is that of Apolipoprotein D (APOD) from Cavia porcellus (Guinea pig).